A 90-amino-acid chain; its full sequence is MSVKIRLKRMGSKKNPFYRIVVADSRSPRDGRFIAQVGTYNPLTEPAQVKLEEEDILGWLNNGAQPSDTVKNILSKAGIMKKYHEAKFTK.

This sequence belongs to the bacterial ribosomal protein bS16 family.

This Lactiplantibacillus plantarum (strain ATCC BAA-793 / NCIMB 8826 / WCFS1) (Lactobacillus plantarum) protein is Small ribosomal subunit protein bS16.